The sequence spans 346 residues: UPF0283 membrane protein VP1870 (346 aa).

A disordered region spans residues 1 to 30 (MSELKQKQIFSEKALEKEQQSDSPELTAQK). The span at 21–30 (SDSPELTAQK) shows a compositional bias: polar residues. Helical transmembrane passes span 73–93 (VFAT…VTAV) and 98–118 (WLAL…LGAI).

This sequence belongs to the UPF0283 family.

It localises to the cell inner membrane. The chain is UPF0283 membrane protein VP1870 from Vibrio parahaemolyticus serotype O3:K6 (strain RIMD 2210633).